The following is a 311-amino-acid chain: MSVVNNRVALTNLVSMEALTTEEVLGLINRGSEYKAGKVVISDHQKDLVANLFFENSTRTHKSFEVAEKKLGLTVLDFNADASAVNKGESLYDTVLTMSALGTDICVIRHPEDDYYKELVESPTITASIVNGGDGSGQHPSQCLLDLLTIYEEFGRFEGLKIAIAGDLTHSRVAKSNMQILKRLGAELYFYGPEEWYSEAFNAYGTYIAIDQIIKELDVLMLLRVQHERHDGHQSFSKESYHQAFGLTQERYQQLKDSAIIMHPAPVNRDVEIADSLVEAPKARIVSQMANGVFVRMAIIEAILNGRNKNS.

Carbamoyl phosphate contacts are provided by Arg-59 and Thr-60. Lys-87 is an L-aspartate binding site. The carbamoyl phosphate site is built by Arg-109, His-139, and Gln-142. Residues Arg-172 and Arg-224 each coordinate L-aspartate. Carbamoyl phosphate is bound by residues Ala-265 and Pro-266.

The protein belongs to the aspartate/ornithine carbamoyltransferase superfamily. ATCase family. Heterododecamer (2C3:3R2) of six catalytic PyrB chains organized as two trimers (C3), and six regulatory PyrI chains organized as three dimers (R2).

It catalyses the reaction carbamoyl phosphate + L-aspartate = N-carbamoyl-L-aspartate + phosphate + H(+). It participates in pyrimidine metabolism; UMP biosynthesis via de novo pathway; (S)-dihydroorotate from bicarbonate: step 2/3. Its function is as follows. Catalyzes the condensation of carbamoyl phosphate and aspartate to form carbamoyl aspartate and inorganic phosphate, the committed step in the de novo pyrimidine nucleotide biosynthesis pathway. In Streptococcus pyogenes serotype M4 (strain MGAS10750), this protein is Aspartate carbamoyltransferase catalytic subunit.